A 307-amino-acid chain; its full sequence is 4-hydroxybenzoate octaprenyltransferase (307 aa).

The next 7 membrane-spanning stretches (helical) occupy residues Ala27–Phe47, Trp50–Ile70, Leu101–Leu121, Cys142–Phe162, Ala179–Tyr199, Leu239–Leu259, and Phe285–Trp305.

The protein belongs to the UbiA prenyltransferase family. It depends on Mg(2+) as a cofactor.

The protein resides in the cell inner membrane. It carries out the reaction all-trans-octaprenyl diphosphate + 4-hydroxybenzoate = 4-hydroxy-3-(all-trans-octaprenyl)benzoate + diphosphate. It participates in cofactor biosynthesis; ubiquinone biosynthesis. Functionally, catalyzes the prenylation of para-hydroxybenzoate (PHB) with an all-trans polyprenyl group. Mediates the second step in the final reaction sequence of ubiquinone-8 (UQ-8) biosynthesis, which is the condensation of the polyisoprenoid side chain with PHB, generating the first membrane-bound Q intermediate 3-octaprenyl-4-hydroxybenzoate. The polypeptide is 4-hydroxybenzoate octaprenyltransferase (Methylibium petroleiphilum (strain ATCC BAA-1232 / LMG 22953 / PM1)).